Consider the following 498-residue polypeptide: Lysine--tRNA ligase (498 aa).

Mg(2+) is bound by residues glutamate 411 and glutamate 418.

The protein belongs to the class-II aminoacyl-tRNA synthetase family. In terms of assembly, homodimer. Mg(2+) serves as cofactor.

The protein localises to the cytoplasm. The catalysed reaction is tRNA(Lys) + L-lysine + ATP = L-lysyl-tRNA(Lys) + AMP + diphosphate. In Enterococcus faecalis (strain ATCC 700802 / V583), this protein is Lysine--tRNA ligase.